Reading from the N-terminus, the 122-residue chain is Ribosome-binding factor A (122 aa).

The protein belongs to the RbfA family. In terms of assembly, monomer. Binds 30S ribosomal subunits, but not 50S ribosomal subunits or 70S ribosomes.

It is found in the cytoplasm. Functionally, one of several proteins that assist in the late maturation steps of the functional core of the 30S ribosomal subunit. Associates with free 30S ribosomal subunits (but not with 30S subunits that are part of 70S ribosomes or polysomes). Required for efficient processing of 16S rRNA. May interact with the 5'-terminal helix region of 16S rRNA. The protein is Ribosome-binding factor A of Polynucleobacter necessarius subsp. necessarius (strain STIR1).